The primary structure comprises 288 residues: Phenazine biosynthesis-like domain-containing protein (288 aa).

E46 is an active-site residue.

The protein belongs to the PhzF family. In terms of assembly, interacts with UNRIP/MAWD.

In Rattus norvegicus (Rat), this protein is Phenazine biosynthesis-like domain-containing protein (Pbld).